Here is a 35-residue protein sequence, read N- to C-terminus: Coenzyme PQQ synthesis protein A (35 aa).

Positions 16–20 form a cross-link, pyrroloquinoline quinone (Glu-Tyr); sequence EINMY.

It belongs to the PqqA family.

The protein operates within cofactor biosynthesis; pyrroloquinoline quinone biosynthesis. Functionally, required for coenzyme pyrroloquinoline quinone (PQQ) biosynthesis. PQQ is probably formed by cross-linking a specific glutamate to a specific tyrosine residue and excising these residues from the peptide. The sequence is that of Coenzyme PQQ synthesis protein A from Roseobacter denitrificans (strain ATCC 33942 / OCh 114) (Erythrobacter sp. (strain OCh 114)).